Consider the following 147-residue polypeptide: Large ribosomal subunit protein uL13 (147 aa).

Belongs to the universal ribosomal protein uL13 family. Part of the 50S ribosomal subunit.

In terms of biological role, this protein is one of the early assembly proteins of the 50S ribosomal subunit, although it is not seen to bind rRNA by itself. It is important during the early stages of 50S assembly. This chain is Large ribosomal subunit protein uL13, found in Deinococcus geothermalis (strain DSM 11300 / CIP 105573 / AG-3a).